The chain runs to 113 residues: uncharacterized protein (113 aa).

The signal sequence occupies residues 1-29; it reads MLVVYMCIWVLYLLLFLFLFLFIASPASL. A run of 2 helical transmembrane segments spans residues 34-54 and 56-76; these read THILQCLYYFSLLLISGCAFF and QVLCLVLPLFCFVLFCFFYFF.

Its subcellular location is the membrane. This is an uncharacterized protein from Saccharomyces cerevisiae (strain ATCC 204508 / S288c) (Baker's yeast).